The sequence spans 455 residues: DNA repair protein RadA (455 aa).

The segment at 12-29 (CSECGSYSPKWLGQCPGC) adopts a C4-type zinc-finger fold. 95-102 (GEPGIGKS) contributes to the ATP binding site. The short motif at 252-256 (KNRFG) is the RadA KNRFG motif element. The lon-protease-like stretch occupies residues 351-455 (DVFLSIAGGL…TIKDAVRLLQ (105 aa)).

It belongs to the RecA family. RadA subfamily.

Its function is as follows. DNA-dependent ATPase involved in processing of recombination intermediates, plays a role in repairing DNA breaks. Stimulates the branch migration of RecA-mediated strand transfer reactions, allowing the 3' invading strand to extend heteroduplex DNA faster. Binds ssDNA in the presence of ADP but not other nucleotides, has ATPase activity that is stimulated by ssDNA and various branched DNA structures, but inhibited by SSB. Does not have RecA's homology-searching function. The protein is DNA repair protein RadA of Chlamydia muridarum (strain MoPn / Nigg).